The primary structure comprises 54 residues: UPF0434 protein BCI_0256 (54 aa).

It belongs to the UPF0434 family.

In Baumannia cicadellinicola subsp. Homalodisca coagulata, this protein is UPF0434 protein BCI_0256.